We begin with the raw amino-acid sequence, 320 residues long: Heterogeneous nuclear ribonucleoprotein A1 (320 aa).

N-acetylmethionine is present on M1. At S2 the chain carries N-acetylserine; in Heterogeneous nuclear ribonucleoprotein A1, N-terminally processed. S2 carries the phosphoserine modification. K3 is modified (N6-acetyllysine; alternate). K3 participates in a covalent cross-link: Glycyl lysine isopeptide (Lys-Gly) (interchain with G-Cter in SUMO2); alternate. 2 positions are modified to phosphoserine: S4 and S6. Residues 4–94 are globular A domain; the sequence is SESPKEPEQL…EPKRAVSRED (91 aa). K8 is covalently cross-linked (Glycyl lysine isopeptide (Lys-Gly) (interchain with G-Cter in SUMO2)). RRM domains follow at residues 14 to 97 and 105 to 184; these read RKLF…DSQR and KKIF…LSKQ. A Phosphoserine modification is found at S22. K78 participates in a covalent cross-link: Glycyl lysine isopeptide (Lys-Gly) (interchain with G-Cter in SUMO2). The interval 95 to 185 is globular B domain; that stretch reads SQRPGAHLTV…EVRKALSKQE (91 aa). A Glycyl lysine isopeptide (Lys-Gly) (interchain with G-Cter in SUMO) cross-link involves residue K113. Glycyl lysine isopeptide (Lys-Gly) (interchain with G-Cter in SUMO2) cross-links involve residues K179 and K183. The interval 182 to 216 is disordered; the sequence is SKQEMASASSSQRGRSGSGNFGGGRGGGFGGNDNF. Phosphoserine; by MKNK2 is present on S192. R194 is subject to Asymmetric dimethylarginine; alternate. The residue at position 194 (R194) is a Dimethylated arginine; alternate. Position 194 is an omega-N-methylarginine; alternate (R194). Residues 197 to 216 are compositionally biased toward gly residues; that stretch reads SGSGNFGGGRGGGFGGNDNF. The residue at position 199 (S199) is a Phosphoserine. Residues R206, R218, R225, and R232 each carry the asymmetric dimethylarginine; alternate modification. Dimethylated arginine; alternate is present on R206. 4 positions are modified to omega-N-methylarginine; alternate: R206, R218, R225, and R232. Positions 218-240 are RNA-binding RGG-box; it reads RGGNFSGRGGFGGSRGGGGYGGS. R225 is subject to Dimethylated arginine; alternate. The segment at 268 to 305 is nuclear targeting sequence; sequence NQSSNFGPMKGGNFGGRSSGPYGGGGQYFAKPRNQGGY. Positions 274–320 are disordered; the sequence is GPMKGGNFGGRSSGPYGGGGQYFAKPRNQGGYGGSSSSSSYGSGRRF. The span at 276–294 shows a compositional bias: gly residues; it reads MKGGNFGGRSSGPYGGGGQ. Omega-N-methylarginine is present on R284. S285 carries the phosphoserine modification. K298 is subject to N6-acetyllysine; alternate. K298 participates in a covalent cross-link: Glycyl lysine isopeptide (Lys-Gly) (interchain with G-Cter in SUMO2); alternate. R300 carries the post-translational modification Omega-N-methylarginine. The span at 308-320 shows a compositional bias: low complexity; sequence SSSSSSYGSGRRF. S309 is subject to Phosphoserine. Phosphoserine; by MKNK2 occurs at positions 310, 311, and 312. Phosphoserine is present on residues S313 and S316. R318 bears the Omega-N-methylarginine mark.

Identified in the spliceosome C complex. Identified in a IGF2BP1-dependent mRNP granule complex containing untranslated mRNAs. Interacts with SEPT6. Interacts with C9orf72. Interacts with KHDRBS1. Interacts with UBQLN2. Interacts with PPIA/CYPA. Sumoylated.

It localises to the nucleus. Its subcellular location is the cytoplasm. Its function is as follows. Involved in the packaging of pre-mRNA into hnRNP particles, transport of poly(A) mRNA from the nucleus to the cytoplasm and modulation of splice site selection. Plays a role in the splicing of pyruvate kinase PKM by binding repressively to sequences flanking PKM exon 9, inhibiting exon 9 inclusion and resulting in exon 10 inclusion and production of the PKM M2 isoform. Binds to the IRES and thereby inhibits the translation of the apoptosis protease activating factor APAF1. May bind to specific miRNA hairpins. This chain is Heterogeneous nuclear ribonucleoprotein A1 (Hnrnpa1), found in Mus musculus (Mouse).